Reading from the N-terminus, the 532-residue chain is Phosphoenolpyruvate carboxykinase (ATP) (532 aa).

Arg-60, Tyr-194, and Lys-200 together coordinate substrate. ATP-binding positions include Lys-200, His-219, and 237–245; that span reads GLSGTGKTT. Mn(2+) contacts are provided by Lys-200 and His-219. A Mn(2+)-binding site is contributed by Asp-258. Residues Glu-286, Arg-324, and Thr-449 each contribute to the ATP site. Arg-324 serves as a coordination point for substrate.

This sequence belongs to the phosphoenolpyruvate carboxykinase (ATP) family. Mn(2+) is required as a cofactor.

The protein resides in the cytoplasm. It carries out the reaction oxaloacetate + ATP = phosphoenolpyruvate + ADP + CO2. It participates in carbohydrate biosynthesis; gluconeogenesis. In terms of biological role, involved in the gluconeogenesis. Catalyzes the conversion of oxaloacetate (OAA) to phosphoenolpyruvate (PEP) through direct phosphoryl transfer between the nucleoside triphosphate and OAA. The polypeptide is Phosphoenolpyruvate carboxykinase (ATP) (Ruegeria pomeroyi (strain ATCC 700808 / DSM 15171 / DSS-3) (Silicibacter pomeroyi)).